Here is a 512-residue protein sequence, read N- to C-terminus: Neuronal acetylcholine receptor subunit alpha-3 (512 aa).

The first 23 residues, 1-23, serve as a signal peptide directing secretion; sequence MNSASRITLFFLLTVLITQECLS. Residues 24-242 lie on the Extracellular side of the membrane; sequence SKGEDRLFRR…PLFYTINLII (219 aa). Residues Asn-47 and Asn-164 are each glycosylated (N-linked (GlcNAc...) asparagine). 2 disulfide bridges follow: Cys-151-Cys-165 and Cys-215-Cys-216. The helical transmembrane segment at 243 to 258 threads the bilayer; it reads PCLLISFLTILVFYLP. The Cytoplasmic segment spans residues 259 to 260; that stretch reads SD. Residues 261–277 traverse the membrane as a helical segment; sequence CGEKVTLCISVLLSLTV. Glu-263 is a Na(+) binding site. Residues 278–299 lie on the Extracellular side of the membrane; the sequence is FLLVITETIPSTSLVIPLIGEY. A helical membrane pass occupies residues 300-318; the sequence is LLFTMIFVTLSIVITVFVL. The Cytoplasmic portion of the chain corresponds to 319 to 482; that stretch reads NVHYRTPMTH…EDDWKYVAMV (164 aa). The tract at residues 356–389 is disordered; the sequence is ESSGKGGGEIAGSSGTGGGRGAEGKKMKSSASQQ. A compositionally biased stretch (gly residues) spans 359–376; sequence GKGGGEIAGSSGTGGGRG. Residues 483-501 traverse the membrane as a helical segment; that stretch reads IDRIFLWVFVLVCVLGTLG. The Extracellular portion of the chain corresponds to 502–512; sequence LFLQPLIGFFS.

It belongs to the ligand-gated ion channel (TC 1.A.9) family. Acetylcholine receptor (TC 1.A.9.1) subfamily. Alpha-3/CHRNA3 sub-subfamily. In terms of assembly, neuronal AChR is composed of two different types of subunits: alpha and beta. CHRNA3/Alpha-3 subunit can be combined to CHRNB2/beta-2 or CHRNB4/beta-4 to give rise to functional receptors. As to expression, expressed in retina and brain.

It localises to the synaptic cell membrane. Its subcellular location is the cell membrane. The protein resides in the endoplasmic reticulum. It is found in the golgi apparatus. The enzyme catalyses K(+)(in) = K(+)(out). It catalyses the reaction Na(+)(in) = Na(+)(out). The catalysed reaction is Ca(2+)(in) = Ca(2+)(out). With respect to regulation, activated by a myriad of ligands such as acetylcholine, cytisine, nicotine, choline and epibatidine. The heteropentamer CHRNA3:CHRNB2 activity is blocked by alpha-conotoxins ImI, ImII, PnIA, GID and MII. The heteropentamer CHRNA3:CHRNB4 activity is blocked by the alpha-conotoxin ImI and AuIB. Functionally, component of neuronal acetylcholine receptors (nAChRs) that function as pentameric, ligand-gated cation channels with high calcium permeability among other activities. nAChRs are excitatory neurotrasnmitter receptors formed by a collection of nAChR subunits known to mediate synaptic transmission in the nervous system and the neuromuscular junction. Each nAchR subunit confers differential attributes to channel properties, including activation, deactivation and desensitization kinetics, pH sensitivity, cation permeability, and binding to allosteric modulators. CHRNA3 forms heteropentameric neuronal acetylcholine receptors with CHRNB2 and CHRNB4. CHRNA3:CHRNB4 being predominant in neurons of the autonomic ganglia, it is known as ganglionic nicotinic receptor. CHRNA3:CHRNB4 also plays an important role in the habenulo-interpeduncular tract, modulating the mesolimbic dopamine system and affecting reward circuits and addiction. Hypothalamic CHRNA3:CHRNB4 nAChR activation by nicotine leads to activation of POMC neurons and a decrease in food intake. Also expressed in the urothelium where it modulates reflex bladder activity by increasing intracellular calcium through extracellular influx and basal ATP release. This chain is Neuronal acetylcholine receptor subunit alpha-3 (chrna3), found in Carassius auratus (Goldfish).